The chain runs to 261 residues: Caveolae-associated protein 3 (261 aa).

The interval 1-84 (MRESALERGP…SNTLAQLLAK (84 aa)) is interaction with CAVIN1. The segment at 20–78 (VHAVTVVTLLEKLASMLETLRERQGGLARRQGGLAGSVRRIQSGLGALSRSHDTTSNTL) is leucine-zipper. Phosphoserine occurs at positions 62 and 70. Residue K128 forms a Glycyl lysine isopeptide (Lys-Gly) (interchain with G-Cter in SUMO2) linkage. The tract at residues 135–203 (ASAFQKAPEP…SGRKGPAAPP (69 aa)) is interaction with CAV1. The segment at 139 to 261 (QKAPEPLGPA…EALLQMESVA (123 aa)) is disordered. Residues 158–170 (LEAEVGESSDEEP) show a composition bias toward acidic residues. A phosphoserine mark is found at S165, S166, and S173. Pro residues predominate over residues 200–212 (AAPPPTPVKPPRL). Residues 213–231 (GPGRSAEAQPEAQPALEPT) are compositionally biased toward low complexity.

Belongs to the CAVIN family. In terms of assembly, component of the CAVIN complex composed of CAVIN1, CAVIN2, CAVIN3 and CAVIN4. Interacts with PRKCD and with phosphatidylserine. Phosphatidylserine may form a bridge between PKC and PKC-binding partners and stabilize the binding. Interacts with PER2. Interacts with CAVIN1. Interacts (via leucine-zipper domain) with CAV1 in a cholesterol-sensitive manner. Interacts with EPS15L1. In terms of processing, in vitro, phosphorylated by PRKCD. In terms of tissue distribution, skeletal muscle, liver, stomach, lung, kidney and heart (at protein level). Strongly expressed in mammary and epithelial cells.

The protein resides in the cytoplasm. Its subcellular location is the membrane. It is found in the caveola. It localises to the cytosol. Functionally, regulates the traffic and/or budding of caveolae. Plays a role in caveola formation in a tissue-specific manner. Required for the formation of caveolae in smooth muscle but not in the lung and heart endothelial cells. Regulates the equilibrium between cell surface-associated and cell surface-dissociated caveolae by promoting the rapid release of caveolae from the cell surface. Plays a role in the regulation of the circadian clock. Modulates the period length and phase of circadian gene expression and also regulates expression and interaction of the core clock components PER1/2 and CRY1/2. The chain is Caveolae-associated protein 3 from Homo sapiens (Human).